The following is a 532-amino-acid chain: MPKISSRDGGRPAQRTVNPIIVTRRGKIARLESGLTPQEAQIEDLVFLRKVLNRADIPYLLIRNHKNRPVLAINIELRAGLERALAAACATEPMYAKTIDEPGLSPVLVATDGLSQLVDPRVVRLYRRRIAPGGFRYGPAFGVELQFWVYEETVIRCPVENSLSRKVLPRNEITPTNVKLYGYKWPTLDGMFAPHASDVVFDIDMVFSWVDGSDPEFRARRMAQMSQYVVGEGDDAEARIRQIDELKYALRSVNMFAPWIRRIFIATDSTPPPWLAEHPKITIVRAEDHFSDRSALPTYNSHAVESQLHHIPGLSEHFLYSNDDMFFGRPLKASMFFSPGGVTRFIEAKTRIGLGANNPARSGFENAARVNRQLLFDRFGQVITRHLEHTAVPLRKSVLIEMEREFPEEFARTAASPFRSDTDISVTNSFYHYYALMTGRAVPQEKAKVLYVDTTSYAGLRLLPKLRKHRGYDFFCLNDGSFPEVPAAQRAERVVSFLERYFPIPAPWEKIAADVSRRDFAVPRTSAPSEGA.

It belongs to the stealth family.

In Mycobacterium bovis (strain ATCC BAA-935 / AF2122/97), this protein is Exopolysaccharide phosphotransferase CpsY (cpsY).